Here is a 101-residue protein sequence, read N- to C-terminus: UPF0235 protein Maeo_0841 (101 aa).

The protein belongs to the UPF0235 family.

This is UPF0235 protein Maeo_0841 from Methanococcus aeolicus (strain ATCC BAA-1280 / DSM 17508 / OCM 812 / Nankai-3).